The sequence spans 391 residues: 1-deoxy-D-xylulose 5-phosphate reductoisomerase (391 aa).

Position 109 (Asn109) interacts with NADPH. Lys110 is a binding site for 1-deoxy-D-xylulose 5-phosphate. Glu111 contributes to the NADPH binding site. Position 135 (Asp135) interacts with Mn(2+). Positions 136, 137, 171, and 194 each coordinate 1-deoxy-D-xylulose 5-phosphate. Position 137 (Glu137) interacts with Mn(2+). Gly200 serves as a coordination point for NADPH. The 1-deoxy-D-xylulose 5-phosphate site is built by Ser207, Asn212, Arg213, and Glu216. Glu216 is a binding site for Mn(2+).

This sequence belongs to the DXR family. As to quaternary structure, homodimer. Mg(2+) serves as cofactor. It depends on Mn(2+) as a cofactor.

The catalysed reaction is 2-C-methyl-D-erythritol 4-phosphate + NADP(+) = 1-deoxy-D-xylulose 5-phosphate + NADPH + H(+). Its pathway is isoprenoid biosynthesis; isopentenyl diphosphate biosynthesis via DXP pathway; isopentenyl diphosphate from 1-deoxy-D-xylulose 5-phosphate: step 1/6. Catalyzes the NADPH-dependent rearrangement and reduction of 1-deoxy-D-xylulose-5-phosphate (DXP) to 2-C-methyl-D-erythritol 4-phosphate (MEP). This is 1-deoxy-D-xylulose 5-phosphate reductoisomerase from Blochmanniella floridana.